Consider the following 437-residue polypeptide: Serine--tRNA ligase (437 aa).

240–242 (TAE) contacts L-serine. Position 271 to 273 (271 to 273 (RAE)) interacts with ATP. E294 is a binding site for L-serine. 358 to 361 (EISS) serves as a coordination point for ATP. Residue S394 participates in L-serine binding.

Belongs to the class-II aminoacyl-tRNA synthetase family. Type-1 seryl-tRNA synthetase subfamily. In terms of assembly, homodimer. The tRNA molecule binds across the dimer.

Its subcellular location is the cytoplasm. The catalysed reaction is tRNA(Ser) + L-serine + ATP = L-seryl-tRNA(Ser) + AMP + diphosphate + H(+). The enzyme catalyses tRNA(Sec) + L-serine + ATP = L-seryl-tRNA(Sec) + AMP + diphosphate + H(+). Its pathway is aminoacyl-tRNA biosynthesis; selenocysteinyl-tRNA(Sec) biosynthesis; L-seryl-tRNA(Sec) from L-serine and tRNA(Sec): step 1/1. Its function is as follows. Catalyzes the attachment of serine to tRNA(Ser). Is also able to aminoacylate tRNA(Sec) with serine, to form the misacylated tRNA L-seryl-tRNA(Sec), which will be further converted into selenocysteinyl-tRNA(Sec). The protein is Serine--tRNA ligase of Methylobacterium nodulans (strain LMG 21967 / CNCM I-2342 / ORS 2060).